A 234-amino-acid chain; its full sequence is Ribonuclease HII (234 aa).

The 188-residue stretch at 47–234 (IRIAGVDEVG…KTVHKILYQE (188 aa)) folds into the RNase H type-2 domain. Residues Asp53, Glu54, and Asp144 each contribute to the a divalent metal cation site.

Belongs to the RNase HII family. The cofactor is Mn(2+). Requires Mg(2+) as cofactor.

Its subcellular location is the cytoplasm. The enzyme catalyses Endonucleolytic cleavage to 5'-phosphomonoester.. In terms of biological role, endonuclease that specifically degrades the RNA of RNA-DNA hybrids. The protein is Ribonuclease HII of Ruegeria pomeroyi (strain ATCC 700808 / DSM 15171 / DSS-3) (Silicibacter pomeroyi).